Consider the following 486-residue polypeptide: Cardiolipin synthase A (486 aa).

Helical transmembrane passes span 3 to 23 and 38 to 58; these read TFYTVVSWLVILGYWVLIAGV and MAWLLIIYILPLVGIIAYLSV. 2 consecutive PLD phosphodiesterase domains span residues 219-246 and 399-426; these read MDLRQHRKMVMIDNYIAYTGSMNMVDPR and EGGLLHTKSVLVDGELSLVGTVNLDMRS. Catalysis depends on residues His-224, Lys-226, Asp-231, His-404, Lys-406, and Asp-411.

The protein belongs to the phospholipase D family. Cardiolipin synthase subfamily. ClsA sub-subfamily.

It is found in the cell inner membrane. It carries out the reaction 2 a 1,2-diacyl-sn-glycero-3-phospho-(1'-sn-glycerol) = a cardiolipin + glycerol. Catalyzes the reversible phosphatidyl group transfer from one phosphatidylglycerol molecule to another to form cardiolipin (CL) (diphosphatidylglycerol) and glycerol. This chain is Cardiolipin synthase A, found in Salmonella arizonae (strain ATCC BAA-731 / CDC346-86 / RSK2980).